Here is a 149-residue protein sequence, read N- to C-terminus: Lipoprotein signal peptidase (149 aa).

The next 3 helical transmembrane spans lie at 24–44 (SHIALGASTSIVTGLLSLTNL), 57–77 (KMWFFYLISVIALIVMGYLLW), and 81–101 (GKWLYEVGISLMIAGTLGNFI). Residues aspartate 111 and aspartate 127 contribute to the active site. Residues 122-142 (IFNFADSCLTVGVIFILIGVL) traverse the membrane as a helical segment.

Belongs to the peptidase A8 family.

Its subcellular location is the cell membrane. The catalysed reaction is Release of signal peptides from bacterial membrane prolipoproteins. Hydrolyzes -Xaa-Yaa-Zaa-|-(S,diacylglyceryl)Cys-, in which Xaa is hydrophobic (preferably Leu), and Yaa (Ala or Ser) and Zaa (Gly or Ala) have small, neutral side chains.. The protein operates within protein modification; lipoprotein biosynthesis (signal peptide cleavage). In terms of biological role, this protein specifically catalyzes the removal of signal peptides from prolipoproteins. This chain is Lipoprotein signal peptidase, found in Lactiplantibacillus plantarum (strain ATCC BAA-793 / NCIMB 8826 / WCFS1) (Lactobacillus plantarum).